An 839-amino-acid chain; its full sequence is Dynein axonemal assembly factor 5 (839 aa).

HEAT repeat units follow at residues 10 to 48 (TSDV…DEKL), 54 to 92 (QHVF…HVPR), 94 to 137 (EEAL…VCGK), 140 to 178 (APYL…CIPE), 181 to 219 (HMQA…YSSG), 221 to 257 (SVDD…KLQD), 259 to 297 (YSFF…QWEK), 578 to 617 (GETL…KASE), 675 to 713 (LQVE…TCER), 717 to 755 (PDKL…CITD), and 723 to 761 (IYPE…ERTT).

This sequence belongs to the DNAAF5 family. Interacts with DNAI2; probably involved in outer arm dynein assembly.

Its subcellular location is the cytoplasm. The protein resides in the dynein axonemal particle. Cytoplasmic protein involved in the delivery of the dynein machinery to the motile cilium. It is required for the assembly of the axonemal dynein inner and outer arms, two structures attached to the peripheral outer doublet A microtubule of the axoneme, that play a crucial role in cilium motility. This Xenopus laevis (African clawed frog) protein is Dynein axonemal assembly factor 5.